A 576-amino-acid chain; its full sequence is K(+)/H(+) antiporter NhaP2 (576 aa).

Helical transmembrane passes span 6–26, 34–54, 58–78, 87–107, 109–129, 163–183, 185–205, 219–239, 242–262, 271–291, 299–319, 335–355, and 359–379; these read INSFFLIGALLTAVSVLLSPM, ILLIFLAVGILAGEDGPGGIL, YSTAYLVSNLALAIILLDGGM, VALWPALSLATFGVAITTSIT, MMAAWLFDLHWLQGLLVGAIV, PMAVFLTVTLIAILANVDTEM, FSFMFISFIKQFGLGICLGLG, LADGLYSILVLSGGLIIYAAS, LGGSGILSIYLVGLFLGNKPT, VLDGMTWVSQIGMFLVLGLLL, ILIPGFALAFGMILFARPVAV, WFISWVGLRGAVPIILAVFPM, and LPGAQLYFNLAFFVVLVSLLV. Positions 405-486 constitute an RCK C-terminal domain; it reads SGVEIYPSSE…LEALSNLFSQ (82 aa).

It belongs to the monovalent cation:proton antiporter 1 (CPA1) transporter (TC 2.A.36) family. NhaP2 subfamily.

Its subcellular location is the cell inner membrane. The catalysed reaction is K(+)(in) + H(+)(out) = K(+)(out) + H(+)(in). Functionally, k(+)/H(+) antiporter that extrudes potassium in exchange for external protons and maintains the internal concentration of potassium under toxic levels. The polypeptide is K(+)/H(+) antiporter NhaP2 (Shewanella baltica (strain OS223)).